Reading from the N-terminus, the 575-residue chain is Delta-selinene-like synthase, chloroplastic (575 aa).

5 residues coordinate (2E,6E)-farnesyl diphosphate: Arg288, Asp325, Asp329, Arg466, and Asp469. 2 residues coordinate Mg(2+): Asp325 and Asp329. The short motif at 325–329 (DDLYD) is the DDXXD motif element. Mg(2+) contacts are provided by Asp469 and Glu477.

This sequence belongs to the terpene synthase family. Tpsb subfamily. In terms of assembly, monomer. It depends on Mg(2+) as a cofactor. The cofactor is Mn(2+).

It is found in the plastid. It localises to the chloroplast. It catalyses the reaction (2E,6E)-farnesyl diphosphate = (+)-delta-selinene + diphosphate. It functions in the pathway secondary metabolite biosynthesis; terpenoid biosynthesis. Its pathway is terpene metabolism; oleoresin biosynthesis. Sesquiterpene synthase (sesqui-TPS) involved in the biosynthesis of sesquiterpene natural products. Catalyzes the conversion of (2E)-geranyl diphosphate (GPP) into delta-selinene. This is Delta-selinene-like synthase, chloroplastic from Picea sitchensis (Sitka spruce).